Reading from the N-terminus, the 1060-residue chain is Desmoglein-1-beta (1060 aa).

The first 23 residues, 1–23 (MDWHSFRIAALLLTSLVVLEVNS), serve as a signal peptide directing secretion. The propeptide occupies 24–49 (EFQIQVRDHNAKNGTIKWHSIRRQKR). 4 Cadherin domains span residues 50 to 157 (EWIK…PPVF), 158 to 269 (SMTT…IPYL), 270 to 389 (EQSS…RPGS), and 386 to 493 (RPGS…PGSD). The Extracellular portion of the chain corresponds to 50-567 (EWIKFAAACR…ITEDNVHFGP (518 aa)). A glycan (N-linked (GlcNAc...) (high mannose) asparagine) is linked at Asn110. N-linked (GlcNAc...) asparagine glycosylation occurs at Asn180. A disordered region spans residues 490–560 (PGSDGGGSSS…PEPEPFDITE (71 aa)). Residues 492-503 (SDGGGSSSGSGG) are compositionally biased toward gly residues. A compositionally biased stretch (polar residues) spans 510–519 (NGYQGTSTVG). Positions 525-537 (GSGGVTSSGGGSG) are enriched in gly residues. Residues 549-560 (DEPEPEPFDITE) show a composition bias toward acidic residues. The chain crosses the membrane as a helical span at residues 568-588 (AGIGLLIMGFLVLGLVPFLLI). At 589–1060 (CCDCGGAPGG…TKYSTVQYSK (472 aa)) the chain is on the cytoplasmic side. Positions 792-801 (PDPDSSWPPQ) are enriched in low complexity. The tract at residues 792–811 (PDPDSSWPPQSTEPMCPQST) is disordered. Desmoglein repeat repeat units follow at residues 835 to 861 (AYPS…TVRE), 862 to 891 (SYAT…ERVV), 892 to 921 (GPVP…ERVI), 922 to 949 (APGS…ERVI), and 950 to 978 (QPTS…ERVV).

In terms of assembly, interacts with DSC3; there is evidence to suggest that the interaction promotes cell-cell adhesion of keratinocytes. As to expression, expressed in epidermis.

It is found in the cell membrane. It localises to the cell junction. The protein localises to the desmosome. The protein resides in the cytoplasm. Its subcellular location is the nucleus. In terms of biological role, component of intercellular desmosome junctions. Involved in the interaction of plaque proteins and intermediate filaments mediating cell-cell adhesion. This is Desmoglein-1-beta (Dsg1b) from Mus musculus (Mouse).